The following is a 432-amino-acid chain: Glutamyl-tRNA reductase (432 aa).

Residues 49–52, Ser101, 106–108, and Gln112 contribute to the substrate site; these read TCNR and EPQ. Catalysis depends on Cys50, which acts as the Nucleophile. NADP(+) is bound at residue 181 to 186; that stretch reads GAGETI. Residues 408–432 form a disordered region; sequence PEKPGYRHPPVATPIVRTDDANPAP.

The protein belongs to the glutamyl-tRNA reductase family. Homodimer.

It carries out the reaction (S)-4-amino-5-oxopentanoate + tRNA(Glu) + NADP(+) = L-glutamyl-tRNA(Glu) + NADPH + H(+). It functions in the pathway porphyrin-containing compound metabolism; protoporphyrin-IX biosynthesis; 5-aminolevulinate from L-glutamyl-tRNA(Glu): step 1/2. Its function is as follows. Catalyzes the NADPH-dependent reduction of glutamyl-tRNA(Glu) to glutamate 1-semialdehyde (GSA). This Xanthomonas campestris pv. campestris (strain 8004) protein is Glutamyl-tRNA reductase.